Here is a 262-residue protein sequence, read N- to C-terminus: Zinc import ATP-binding protein ZnuC (262 aa).

The region spanning 5 to 220 (IELQDICVDF…PSYLAMFGHR (216 aa)) is the ABC transporter domain. 37 to 44 (GPNGAGKS) is an ATP binding site.

The protein belongs to the ABC transporter superfamily. Zinc importer (TC 3.A.1.15.5) family. In terms of assembly, the complex is composed of two ATP-binding proteins (ZnuC), two transmembrane proteins (ZnuB) and a solute-binding protein (ZnuA).

It is found in the cell inner membrane. The enzyme catalyses Zn(2+)(out) + ATP(in) + H2O(in) = Zn(2+)(in) + ADP(in) + phosphate(in) + H(+)(in). Its function is as follows. Part of the ABC transporter complex ZnuABC involved in zinc import. Responsible for energy coupling to the transport system. The polypeptide is Zinc import ATP-binding protein ZnuC (Vibrio cholerae serotype O1 (strain ATCC 39315 / El Tor Inaba N16961)).